The sequence spans 279 residues: Thymidylate synthase (279 aa).

Position 37 (arginine 37) interacts with dUMP. Position 67 (histidine 67) interacts with (6R)-5,10-methylene-5,6,7,8-tetrahydrofolate. 142–143 (RR) is a dUMP binding site. The active-site Nucleophile is cysteine 162. DUMP-binding positions include 182–185 (RSAD), asparagine 193, and 223–225 (HLY). A (6R)-5,10-methylene-5,6,7,8-tetrahydrofolate-binding site is contributed by aspartate 185. Residue serine 278 coordinates (6R)-5,10-methylene-5,6,7,8-tetrahydrofolate.

Belongs to the thymidylate synthase family. Bacterial-type ThyA subfamily. In terms of assembly, homodimer.

It localises to the cytoplasm. The catalysed reaction is dUMP + (6R)-5,10-methylene-5,6,7,8-tetrahydrofolate = 7,8-dihydrofolate + dTMP. The protein operates within pyrimidine metabolism; dTTP biosynthesis. Functionally, catalyzes the reductive methylation of 2'-deoxyuridine-5'-monophosphate (dUMP) to 2'-deoxythymidine-5'-monophosphate (dTMP) while utilizing 5,10-methylenetetrahydrofolate (mTHF) as the methyl donor and reductant in the reaction, yielding dihydrofolate (DHF) as a by-product. This enzymatic reaction provides an intracellular de novo source of dTMP, an essential precursor for DNA biosynthesis. The sequence is that of Thymidylate synthase from Caulobacter vibrioides (strain ATCC 19089 / CIP 103742 / CB 15) (Caulobacter crescentus).